The primary structure comprises 199 residues: Probable cobalt-precorrin-6B C(15)-methyltransferase (decarboxylating) (199 aa).

Residues Thr-24, 48 to 52, Asp-72, and Ala-101 contribute to the S-adenosyl-L-methionine site; that span reads GCGTG.

The protein belongs to the methyltransferase superfamily. Archaeal-type CbiT family.

The catalysed reaction is Co-precorrin-6B + S-adenosyl-L-methionine = Co-precorrin-7 + S-adenosyl-L-homocysteine + CO2. The protein operates within cofactor biosynthesis; adenosylcobalamin biosynthesis; cob(II)yrinate a,c-diamide from sirohydrochlorin (anaerobic route): step 8/10. Functionally, catalyzes the methylation of C-15 in cobalt-precorrin-6B followed by the decarboxylation of C-12 to form cobalt-precorrin-7. In Saccharolobus solfataricus (strain ATCC 35092 / DSM 1617 / JCM 11322 / P2) (Sulfolobus solfataricus), this protein is Probable cobalt-precorrin-6B C(15)-methyltransferase (decarboxylating).